The primary structure comprises 206 residues: Dephospho-CoA kinase (206 aa).

A DPCK domain is found at 4 to 204 (IVGLTGGIGS…QFYLQQAENK (201 aa)). 12–17 (GSGKTT) is a binding site for ATP.

This sequence belongs to the CoaE family.

It is found in the cytoplasm. The catalysed reaction is 3'-dephospho-CoA + ATP = ADP + CoA + H(+). Its pathway is cofactor biosynthesis; coenzyme A biosynthesis; CoA from (R)-pantothenate: step 5/5. Catalyzes the phosphorylation of the 3'-hydroxyl group of dephosphocoenzyme A to form coenzyme A. This Haemophilus influenzae (strain ATCC 51907 / DSM 11121 / KW20 / Rd) protein is Dephospho-CoA kinase.